The following is a 316-amino-acid chain: Aspartate carbamoyltransferase catalytic subunit (316 aa).

Carbamoyl phosphate is bound by residues arginine 56 and threonine 57. Lysine 84 lines the L-aspartate pocket. Carbamoyl phosphate contacts are provided by arginine 106, histidine 139, and glutamine 142. Residues arginine 172 and arginine 226 each coordinate L-aspartate. Residues glycine 267 and proline 268 each contribute to the carbamoyl phosphate site.

The protein belongs to the aspartate/ornithine carbamoyltransferase superfamily. ATCase family. In terms of assembly, heterododecamer (2C3:3R2) of six catalytic PyrB chains organized as two trimers (C3), and six regulatory PyrI chains organized as three dimers (R2).

It carries out the reaction carbamoyl phosphate + L-aspartate = N-carbamoyl-L-aspartate + phosphate + H(+). Its pathway is pyrimidine metabolism; UMP biosynthesis via de novo pathway; (S)-dihydroorotate from bicarbonate: step 2/3. Its function is as follows. Catalyzes the condensation of carbamoyl phosphate and aspartate to form carbamoyl aspartate and inorganic phosphate, the committed step in the de novo pyrimidine nucleotide biosynthesis pathway. This is Aspartate carbamoyltransferase catalytic subunit from Mycobacterium sp. (strain JLS).